The following is a 200-amino-acid chain: Probable GTP-binding protein EngB (200 aa).

The region spanning 24–199 is the EngB-type G domain; it reads EGAEVAFAGR…RGVIGGWLGL (176 aa). Residues 32–39, 59–63, 77–80, 144–147, and 178–180 contribute to the GTP site; these read GRSNAGKS, GRTQQ, DLPG, TKAD, and FSG. 2 residues coordinate Mg(2+): Ser-39 and Thr-61.

It belongs to the TRAFAC class TrmE-Era-EngA-EngB-Septin-like GTPase superfamily. EngB GTPase family. It depends on Mg(2+) as a cofactor.

In terms of biological role, necessary for normal cell division and for the maintenance of normal septation. The polypeptide is Probable GTP-binding protein EngB (Stenotrophomonas maltophilia (strain K279a)).